Consider the following 670-residue polypeptide: Transketolase (670 aa).

Histidine 31 is a binding site for substrate. Thiamine diphosphate is bound by residues histidine 71 and glycine 120–leucine 122. A Mg(2+)-binding site is contributed by aspartate 161. Thiamine diphosphate is bound by residues glycine 162 and asparagine 191. The Mg(2+) site is built by asparagine 191 and isoleucine 193. The substrate site is built by histidine 268, arginine 362, and serine 389. Histidine 268 lines the thiamine diphosphate pocket. Glutamate 416 acts as the Proton donor in catalysis. Residue phenylalanine 443 participates in thiamine diphosphate binding. Substrate-binding residues include histidine 467, aspartate 475, and arginine 528.

As to quaternary structure, homodimer. Mg(2+) serves as cofactor. The cofactor is Ca(2+). It depends on Mn(2+) as a cofactor. Co(2+) is required as a cofactor. Requires thiamine diphosphate as cofactor.

The catalysed reaction is D-sedoheptulose 7-phosphate + D-glyceraldehyde 3-phosphate = aldehydo-D-ribose 5-phosphate + D-xylulose 5-phosphate. Catalyzes the transfer of a two-carbon ketol group from a ketose donor to an aldose acceptor, via a covalent intermediate with the cofactor thiamine pyrophosphate. The sequence is that of Transketolase (tkt) from Nostoc sp. (strain PCC 7120 / SAG 25.82 / UTEX 2576).